The primary structure comprises 99 residues: Nucleoid-associated protein LL0120 (99 aa).

It belongs to the YbaB/EbfC family. As to quaternary structure, homodimer.

The protein localises to the cytoplasm. Its subcellular location is the nucleoid. In terms of biological role, binds to DNA and alters its conformation. May be involved in regulation of gene expression, nucleoid organization and DNA protection. The sequence is that of Nucleoid-associated protein LL0120 (ybcG) from Lactococcus lactis subsp. lactis (strain IL1403) (Streptococcus lactis).